A 372-amino-acid chain; its full sequence is Segmentation polarity homeobox protein engrailed (372 aa).

Disordered stretches follow at residues Met1–Gln35, Tyr47–Thr112, Glu196–Pro246, and Asp261–Ala286. Composition is skewed to basic and acidic residues over residues Asp79–Arg105 and Arg197–Asp215. The segment covering Ser216–Ser244 has biased composition (low complexity). The segment at residues Glu280–Ser339 is a DNA-binding region (homeobox).

The protein belongs to the engrailed homeobox family. In terms of tissue distribution, expressed in the middle silk gland but not in the posterior silk gland during the fourth molt/fifth intermolt period.

The protein resides in the nucleus. Functionally, this protein might be involved in the compartmentalization of the silk gland. The sequence is that of Segmentation polarity homeobox protein engrailed (en) from Bombyx mori (Silk moth).